The sequence spans 124 residues: Ribosome-binding factor A (124 aa).

It belongs to the RbfA family. As to quaternary structure, monomer. Binds 30S ribosomal subunits, but not 50S ribosomal subunits or 70S ribosomes.

The protein resides in the cytoplasm. Functionally, one of several proteins that assist in the late maturation steps of the functional core of the 30S ribosomal subunit. Associates with free 30S ribosomal subunits (but not with 30S subunits that are part of 70S ribosomes or polysomes). Required for efficient processing of 16S rRNA. May interact with the 5'-terminal helix region of 16S rRNA. The protein is Ribosome-binding factor A of Thiobacillus denitrificans (strain ATCC 25259 / T1).